Consider the following 728-residue polypeptide: 1,4-alpha-glucan branching enzyme GlgB (728 aa).

The Nucleophile role is filled by aspartate 405. The active-site Proton donor is glutamate 458. A disordered region spans residues 686–712 (YHGSNAGNAGAVQSDEHESHGRPHSLS).

The protein belongs to the glycosyl hydrolase 13 family. GlgB subfamily. As to quaternary structure, monomer.

It carries out the reaction Transfers a segment of a (1-&gt;4)-alpha-D-glucan chain to a primary hydroxy group in a similar glucan chain.. The protein operates within glycan biosynthesis; glycogen biosynthesis. Functionally, catalyzes the formation of the alpha-1,6-glucosidic linkages in glycogen by scission of a 1,4-alpha-linked oligosaccharide from growing alpha-1,4-glucan chains and the subsequent attachment of the oligosaccharide to the alpha-1,6 position. The protein is 1,4-alpha-glucan branching enzyme GlgB of Enterobacter sp. (strain 638).